Consider the following 228-residue polypeptide: MVDGRKPHINVGTIGHVDHGKTTLTAALTTVLAKRLSGEGNKSVKYDEIDKAPEEKARGITISTAHVEYETENRHYAHVDCPGHADYIKNMITGAAQMDAAILVVSATDGAMPQTREHILLAKQVGVKDIVVWMNKCDVVDDEEMLSLVEMEIRELLTKYGYPGDDIDVVKGSAVKALEEESADGVWSEKIMELMNPLEKIDLPIREKDNPFVRSIEDVMFNTPGEAQ.

One can recognise a tr-type G domain in the interval 6-212; it reads KPHINVGTIG…LPIREKDNPF (207 aa). The tract at residues 15-22 is G1; that stretch reads GHVDHGKT. The interval 59 to 63 is G2; sequence GITIS. The segment at 80–83 is G3; it reads DCPG. The segment at 135–138 is G4; that stretch reads NKCD. The interval 173-175 is G5; that stretch reads SAV.

The protein belongs to the TRAFAC class translation factor GTPase superfamily. Classic translation factor GTPase family. EF-Tu/EF-1A subfamily.

The sequence is that of Putative elongation factor Tu-like protein from Ehrlichia ruminantium (strain Welgevonden).